The sequence spans 320 residues: Transcription factor MYB80 (320 aa).

HTH myb-type domains are found at residues 9 to 65 (KENV…RPDL) and 66 to 116 (KHGQ…KKKL). DNA-binding regions (H-T-H motif) lie at residues 37–61 (WRLI…TNYL) and 89–112 (WSLI…NTKL). The disordered stretch occupies residues 257–283 (TAAAEEEERRKLKGEVVDQEEIGSEGG). Positions 263–272 (EERRKLKGEV) are enriched in basic and acidic residues.

Expressed in the tapetum and middle layer of developing anthers. Expressed in trichomes.

Its subcellular location is the nucleus. Transcription factor that binds to the DNA sequence 5'-CCAACC-3'. Regulates directly PME5, UND and GLOX1. Essential for tapetum development in anthers and microsporogenesis. Regulates the timing of tapetal programmed cell death (PCD) which is critical for pollen development. May act through the activation of UND, encoding an A1 aspartic protease. Required for anther development by regulating tapetum development, callose dissolution and exine formation. Acts upstream of A6 and FAR2/MS2, two genes required for pollen exine formation. Negatively regulates trichome endoreduplication and trichome branching. The polypeptide is Transcription factor MYB80 (Arabidopsis thaliana (Mouse-ear cress)).